The chain runs to 410 residues: DNA primase small subunit (410 aa).

Active-site residues include Glu43, Asp106, and Asp108. Residues 118 to 129 carry the Zinc knuckle motif motif; that stretch reads CCKDATVCPKCW.

It belongs to the eukaryotic-type primase small subunit family. In terms of assembly, heterodimer of a small subunit and a large subunit.

In terms of biological role, DNA primase is the polymerase that synthesizes small RNA primers for the Okazaki fragments made during discontinuous DNA replication. The chain is DNA primase small subunit (pri-1) from Caenorhabditis elegans.